A 181-amino-acid polypeptide reads, in one-letter code: 3-hydroxyacyl-[acyl-carrier-protein] dehydratase FabZ (181 aa).

His-54 is an active-site residue.

It belongs to the thioester dehydratase family. FabZ subfamily.

It is found in the cytoplasm. The catalysed reaction is a (3R)-hydroxyacyl-[ACP] = a (2E)-enoyl-[ACP] + H2O. In terms of biological role, involved in unsaturated fatty acids biosynthesis. Catalyzes the dehydration of short chain beta-hydroxyacyl-ACPs and long chain saturated and unsaturated beta-hydroxyacyl-ACPs. This Yersinia pestis protein is 3-hydroxyacyl-[acyl-carrier-protein] dehydratase FabZ.